The following is a 304-amino-acid chain: Bifunctional protein FolD (304 aa).

NADP(+)-binding positions include 176 to 178 (GAS), isoleucine 201, and isoleucine 242.

It belongs to the tetrahydrofolate dehydrogenase/cyclohydrolase family. As to quaternary structure, homodimer.

It catalyses the reaction (6R)-5,10-methylene-5,6,7,8-tetrahydrofolate + NADP(+) = (6R)-5,10-methenyltetrahydrofolate + NADPH. It carries out the reaction (6R)-5,10-methenyltetrahydrofolate + H2O = (6R)-10-formyltetrahydrofolate + H(+). The protein operates within one-carbon metabolism; tetrahydrofolate interconversion. Catalyzes the oxidation of 5,10-methylenetetrahydrofolate to 5,10-methenyltetrahydrofolate and then the hydrolysis of 5,10-methenyltetrahydrofolate to 10-formyltetrahydrofolate. The protein is Bifunctional protein FolD of Gluconobacter oxydans (strain 621H) (Gluconobacter suboxydans).